We begin with the raw amino-acid sequence, 277 residues long: Digeranylgeranylglyceryl phosphate synthase (277 aa).

The next 8 helical transmembrane spans lie at 16 to 36 (ILAG…IPPV), 40 to 60 (ILIF…NDYF), 93 to 113 (FIGL…ALGA), 129 to 149 (FIGN…GAVG), 153 to 173 (IDLA…REIM), 199 to 218 (SGII…FLPV), 222 to 244 (IGLG…IDVL), and 253 to 273 (GQKI…LGAL).

The protein belongs to the UbiA prenyltransferase family. DGGGP synthase subfamily. Requires Mg(2+) as cofactor.

Its subcellular location is the cell membrane. It catalyses the reaction sn-3-O-(geranylgeranyl)glycerol 1-phosphate + (2E,6E,10E)-geranylgeranyl diphosphate = 2,3-bis-O-(geranylgeranyl)-sn-glycerol 1-phosphate + diphosphate. It participates in membrane lipid metabolism; glycerophospholipid metabolism. Prenyltransferase that catalyzes the transfer of the geranylgeranyl moiety of geranylgeranyl diphosphate (GGPP) to the C2 hydroxyl of (S)-3-O-geranylgeranylglyceryl phosphate (GGGP). This reaction is the second ether-bond-formation step in the biosynthesis of archaeal membrane lipids. In Pyrococcus horikoshii (strain ATCC 700860 / DSM 12428 / JCM 9974 / NBRC 100139 / OT-3), this protein is Digeranylgeranylglyceryl phosphate synthase.